A 331-amino-acid polypeptide reads, in one-letter code: tRNA (guanine-N(7)-)-methyltransferase (331 aa).

S-adenosyl-L-methionine contacts are provided by E29, E55, and D105. The active site involves D105. Substrate is bound by residues K109 and D141.

This sequence belongs to the class I-like SAM-binding methyltransferase superfamily. TrmB family.

It catalyses the reaction guanosine(46) in tRNA + S-adenosyl-L-methionine = N(7)-methylguanosine(46) in tRNA + S-adenosyl-L-homocysteine. The protein operates within tRNA modification; N(7)-methylguanine-tRNA biosynthesis. Functionally, catalyzes the formation of N(7)-methylguanine at position 46 (m7G46) in tRNA. The protein is tRNA (guanine-N(7)-)-methyltransferase of Deinococcus geothermalis (strain DSM 11300 / CIP 105573 / AG-3a).